Reading from the N-terminus, the 272-residue chain is Putative pyruvate, phosphate dikinase regulatory protein (272 aa).

An ADP-binding site is contributed by 151–158 (GISRTSKT).

Belongs to the pyruvate, phosphate/water dikinase regulatory protein family. PDRP subfamily.

It carries out the reaction N(tele)-phospho-L-histidyl/L-threonyl-[pyruvate, phosphate dikinase] + ADP = N(tele)-phospho-L-histidyl/O-phospho-L-threonyl-[pyruvate, phosphate dikinase] + AMP + H(+). The catalysed reaction is N(tele)-phospho-L-histidyl/O-phospho-L-threonyl-[pyruvate, phosphate dikinase] + phosphate + H(+) = N(tele)-phospho-L-histidyl/L-threonyl-[pyruvate, phosphate dikinase] + diphosphate. Its function is as follows. Bifunctional serine/threonine kinase and phosphorylase involved in the regulation of the pyruvate, phosphate dikinase (PPDK) by catalyzing its phosphorylation/dephosphorylation. The protein is Putative pyruvate, phosphate dikinase regulatory protein of Staphylococcus aureus (strain USA300).